We begin with the raw amino-acid sequence, 839 residues long: MRRQVKKVLREKADDSMKPGWDVYQPSNDVVYAFNHYMQGSQIDAEAREKAEKAFQEAVKKHPFHNNADHTVDFHGTTVFRNAKGKVCGVLIPKALPSFATSMAADVLECAVARTSLRSALFGGVSPNSGIAGYFDYRGTPVELKCRKTSFTYEHTKEWRSVFPMIDYTSAIYKAALPDHWKAQDAAVPDVVRIHGSPFSTLTVNERFRTASHTDNGDFDNGYGVLAVLKGEYSGLSLALDDYGVCFNMQPTDVLLFDTHLFHSNTELEAKEANATWNRLSCVFYYRAALGEQPCVEEYRRRLKKAKEEKSTSLSFNHIEQKDNGENTNKPAPVYPVSLTPFSCAASAWALRGCAAAMLTRLHGLVRENASLMTELFGEPVEVADGLPRRAPEEIIPVHKHTNVQMHYLGGFSEKGDILNEAMNKRHYLDKENLQKMFGEEFVNIWTQSRTHWLQLVKKEWEHQKETNPTRTRFSWNNTSAMNFAFFDLCDVAKQLMCGAFGDREVNKKEEQSFWGMFAAHLDNACINEIGMLQGSMGMHKLNVKLKDYNFGGTRYLKDMPPEEQERRRRRRLEIEQARRRAPICDSESGDWLRNEAFDYQTEDVAVNYEREQWITPENNAKRFGFPERGVYGAEGAATGTISVLIVLPKPTNHRQKTCELPTSREADRIMKNPAAQRLLCAKPCNIGLSTSSNKSRTVLCGNIRIDKVFDGGSVGGKMYDFVIMRHLLAATTGEREPLECLVRWTSLARYCTFVVEVDLLDRHHYILKSEIGEEYSAVSEICFSALYSATYARDKVNLRTTPCLLSFIDKSGNMLESRFKFNGSPLNTVAFVVRRREK.

A thymine dioxygenase region spans residues 86-288 (KVCGVLIPKA…RLSCVFYYRA (203 aa)). 3 residues coordinate Fe cation: H213, D215, and H263. R279 lines the 2-oxoglutarate pocket. The interval 415 to 583 (KGDILNEAMN…EIEQARRRAP (169 aa)) is DNA-binding JBP1 domain.

It belongs to the TET family. JBP1 subfamily. As to quaternary structure, monomer. Binds to DNA as a monomer. Requires Fe(2+) as cofactor.

The protein resides in the nucleus. It carries out the reaction thymine + 2-oxoglutarate + O2 = 5-hydroxymethyluracil + succinate + CO2. In terms of biological role, dioxygenase that catalyzes the first step of DNA base J (beta-d-glucosyl-HOMedU) biosynthesis by converting thymine to 5-hydroxymethyluracil (HOMedU). DNA base J is a hypermodified thymidine residue found in the genome of kinetoplastid parasites, which is localized primarily to repetitive DNA, namely the telomeres, and is implicated in the regulation of antigenic variation. Also specifically binds to base J-containing DNA (J-DNA). Involved in propagation and maintenance of DNA base J synthesis initiated by JBP2 by specifically binding already synthesized DNA base J and propagating J synthesis. Thymine dioxygenase activity and J-DNA-binding are independent functions. This Trypanosoma brucei brucei (strain 927/4 GUTat10.1) protein is Thymine dioxygenase JBP1 (JBP1).